The chain runs to 254 residues: 5'-nucleotidase SurE (254 aa).

4 residues coordinate a divalent metal cation: Asp-8, Asp-9, Ser-38, and Asn-91.

It belongs to the SurE nucleotidase family. A divalent metal cation is required as a cofactor.

It is found in the cytoplasm. The catalysed reaction is a ribonucleoside 5'-phosphate + H2O = a ribonucleoside + phosphate. In terms of biological role, nucleotidase that shows phosphatase activity on nucleoside 5'-monophosphates. This Anaeromyxobacter sp. (strain K) protein is 5'-nucleotidase SurE.